The chain runs to 355 residues: DNA polymerase IV (355 aa).

The region spanning 6–187 (IIHVDMDAFY…LPVGKIHGVG (182 aa)) is the UmuC domain. 2 residues coordinate Mg(2+): aspartate 10 and aspartate 105. Glutamate 106 is a catalytic residue.

It belongs to the DNA polymerase type-Y family. In terms of assembly, monomer. It depends on Mg(2+) as a cofactor.

The protein localises to the cytoplasm. The enzyme catalyses DNA(n) + a 2'-deoxyribonucleoside 5'-triphosphate = DNA(n+1) + diphosphate. Poorly processive, error-prone DNA polymerase involved in untargeted mutagenesis. Copies undamaged DNA at stalled replication forks, which arise in vivo from mismatched or misaligned primer ends. These misaligned primers can be extended by PolIV. Exhibits no 3'-5' exonuclease (proofreading) activity. May be involved in translesional synthesis, in conjunction with the beta clamp from PolIII. In Alkalilimnicola ehrlichii (strain ATCC BAA-1101 / DSM 17681 / MLHE-1), this protein is DNA polymerase IV.